Reading from the N-terminus, the 251-residue chain is Imidazole glycerol phosphate synthase subunit HisF (251 aa).

Active-site residues include aspartate 11 and aspartate 130.

This sequence belongs to the HisA/HisF family. In terms of assembly, heterodimer of HisH and HisF.

The protein resides in the cytoplasm. It catalyses the reaction 5-[(5-phospho-1-deoxy-D-ribulos-1-ylimino)methylamino]-1-(5-phospho-beta-D-ribosyl)imidazole-4-carboxamide + L-glutamine = D-erythro-1-(imidazol-4-yl)glycerol 3-phosphate + 5-amino-1-(5-phospho-beta-D-ribosyl)imidazole-4-carboxamide + L-glutamate + H(+). It functions in the pathway amino-acid biosynthesis; L-histidine biosynthesis; L-histidine from 5-phospho-alpha-D-ribose 1-diphosphate: step 5/9. Its function is as follows. IGPS catalyzes the conversion of PRFAR and glutamine to IGP, AICAR and glutamate. The HisF subunit catalyzes the cyclization activity that produces IGP and AICAR from PRFAR using the ammonia provided by the HisH subunit. The sequence is that of Imidazole glycerol phosphate synthase subunit HisF from Chlorobium phaeobacteroides (strain BS1).